Here is a 381-residue protein sequence, read N- to C-terminus: Homoserine O-acetyltransferase (381 aa).

The 313-residue stretch at 47–359 (NAILICHALT…DKGHDAFLLD (313 aa)) folds into the AB hydrolase-1 domain. The active-site Nucleophile is serine 153. Arginine 223 contacts substrate. Residues aspartate 320 and histidine 353 contribute to the active site. Substrate is bound at residue aspartate 354.

It belongs to the AB hydrolase superfamily. MetX family. In terms of assembly, homodimer.

It is found in the cytoplasm. It carries out the reaction L-homoserine + acetyl-CoA = O-acetyl-L-homoserine + CoA. It participates in amino-acid biosynthesis; L-methionine biosynthesis via de novo pathway; O-acetyl-L-homoserine from L-homoserine: step 1/1. Functionally, transfers an acetyl group from acetyl-CoA to L-homoserine, forming acetyl-L-homoserine. The sequence is that of Homoserine O-acetyltransferase from Acidiphilium cryptum (strain JF-5).